The primary structure comprises 287 residues: Probable endonuclease 4 (287 aa).

Zn(2+)-binding residues include His-69, His-109, Glu-144, Asp-178, His-181, His-215, Asp-228, His-230, and Glu-260.

This sequence belongs to the AP endonuclease 2 family. Zn(2+) is required as a cofactor.

It carries out the reaction Endonucleolytic cleavage to 5'-phosphooligonucleotide end-products.. In terms of biological role, endonuclease IV plays a role in DNA repair. It cleaves phosphodiester bonds at apurinic or apyrimidinic (AP) sites, generating a 3'-hydroxyl group and a 5'-terminal sugar phosphate. In Thermotoga sp. (strain RQ2), this protein is Probable endonuclease 4.